Consider the following 572-residue polypeptide: Phospholipase B-like protein B (572 aa).

An N-terminal signal peptide occupies residues 1–28; that stretch reads MNKLKSNFILNIVILFTILIFNINFINC. Residues N73, N138, N219, N427, N544, and N564 are each glycosylated (N-linked (GlcNAc...) asparagine).

It belongs to the phospholipase B-like family.

It localises to the secreted. Functionally, probable phospholipase. The chain is Phospholipase B-like protein B (plbB) from Dictyostelium discoideum (Social amoeba).